Reading from the N-terminus, the 302-residue chain is Probable histone acetyltransferase Rv0428c (302 aa).

It carries out the reaction L-lysyl-[histone] + acetyl-CoA = N(6)-acetyl-L-lysyl-[histone] + CoA + H(+). Functionally, shows histone acetyl transferase (HAT) activity with recombinant eukaryotic H3 histone expressed in bacteria as substrate and acetyl-CoA as donor. May be involved in survival under stress conditions. This chain is Probable histone acetyltransferase Rv0428c, found in Mycobacterium tuberculosis (strain ATCC 25618 / H37Rv).